Reading from the N-terminus, the 319-residue chain is Acetyl-coenzyme A carboxylase carboxyl transferase subunit alpha (319 aa).

The 262-residue stretch at 35–296 (NIDEEVHRLR…KTQLLADLAD (262 aa)) folds into the CoA carboxyltransferase C-terminal domain.

It belongs to the AccA family. In terms of assembly, acetyl-CoA carboxylase is a heterohexamer composed of biotin carboxyl carrier protein (AccB), biotin carboxylase (AccC) and two subunits each of ACCase subunit alpha (AccA) and ACCase subunit beta (AccD).

The protein localises to the cytoplasm. The enzyme catalyses N(6)-carboxybiotinyl-L-lysyl-[protein] + acetyl-CoA = N(6)-biotinyl-L-lysyl-[protein] + malonyl-CoA. It functions in the pathway lipid metabolism; malonyl-CoA biosynthesis; malonyl-CoA from acetyl-CoA: step 1/1. Functionally, component of the acetyl coenzyme A carboxylase (ACC) complex. First, biotin carboxylase catalyzes the carboxylation of biotin on its carrier protein (BCCP) and then the CO(2) group is transferred by the carboxyltransferase to acetyl-CoA to form malonyl-CoA. The protein is Acetyl-coenzyme A carboxylase carboxyl transferase subunit alpha of Cronobacter sakazakii (strain ATCC BAA-894) (Enterobacter sakazakii).